The chain runs to 386 residues: Succinate--CoA ligase [ADP-forming] subunit beta (386 aa).

The 236-residue stretch at 9-244 folds into the ATP-grasp domain; that stretch reads KEILRKYGVP…HDEEDPLETR (236 aa). ATP contacts are provided by residues K46, 53-55, E99, C102, and E107; that span reads GRG. Mg(2+) contacts are provided by N199 and D213. Residues N264 and 321 to 323 each bind substrate; that span reads GIM.

It belongs to the succinate/malate CoA ligase beta subunit family. As to quaternary structure, heterotetramer of two alpha and two beta subunits. Mg(2+) is required as a cofactor.

The catalysed reaction is succinate + ATP + CoA = succinyl-CoA + ADP + phosphate. It catalyses the reaction GTP + succinate + CoA = succinyl-CoA + GDP + phosphate. The protein operates within carbohydrate metabolism; tricarboxylic acid cycle; succinate from succinyl-CoA (ligase route): step 1/1. In terms of biological role, succinyl-CoA synthetase functions in the citric acid cycle (TCA), coupling the hydrolysis of succinyl-CoA to the synthesis of either ATP or GTP and thus represents the only step of substrate-level phosphorylation in the TCA. The beta subunit provides nucleotide specificity of the enzyme and binds the substrate succinate, while the binding sites for coenzyme A and phosphate are found in the alpha subunit. The protein is Succinate--CoA ligase [ADP-forming] subunit beta of Rickettsia akari (strain Hartford).